Consider the following 216-residue polypeptide: Ras-related protein Rab-5C (216 aa).

GTP-binding residues include Ser30, Ala31, Gly33, Lys34, Ser35, Ser36, His47, Glu48, Thr53, and Gly79. Ser35 is a binding site for Mg(2+). 2 short sequence motifs (switch) span residues 45–57 and 78–94; these read QFHE…IGAA and AGQE…YRGA. Residue Thr53 participates in Mg(2+) binding. Phosphoserine is present on Ser85. Asn134, Lys135, Asp137, Ala165, and Lys166 together coordinate GTP. A disordered region spans residues 185–216; that stretch reads NEPQNAAGAPSRNRGVDLQENSPASRSQCCSN. Polar residues predominate over residues 203-216; sequence QENSPASRSQCCSN. S-geranylgeranyl cysteine attachment occurs at residues Cys213 and Cys214.

It belongs to the small GTPase superfamily. Rab family. In terms of assembly, interacts with EEA1 and INCA1. Interacts with GDI1, GDI2, CHML and CHM; phosphorylation at Ser-85 disrupts this interaction. Requires Mg(2+) as cofactor. Phosphorylation of Ser-85 in the switch II region by LRRK2 prevents the association of RAB regulatory proteins, including CHM, CHML and RAB GDP dissociation inhibitors GDI1 and GDI2.

It localises to the cell membrane. The protein localises to the early endosome membrane. It is found in the melanosome. The catalysed reaction is GTP + H2O = GDP + phosphate + H(+). Regulated by guanine nucleotide exchange factors (GEFs) which promote the exchange of bound GDP for free GTP. Regulated by GTPase activating proteins (GAPs) which increase the GTP hydrolysis activity. Inhibited by GDP dissociation inhibitors (GDIs). Its function is as follows. The small GTPases Rab are key regulators of intracellular membrane trafficking, from the formation of transport vesicles to their fusion with membranes. Rabs cycle between an inactive GDP-bound form and an active GTP-bound form that is able to recruit to membranes different sets of downstream effectors directly responsible for vesicle formation, movement, tethering and fusion. This chain is Ras-related protein Rab-5C (RAB5C), found in Canis lupus familiaris (Dog).